The primary structure comprises 416 residues: UDP-N-acetylglucosamine 1-carboxyvinyltransferase (416 aa).

22–23 contacts phosphoenolpyruvate; sequence KN. Arg92 contributes to the UDP-N-acetyl-alpha-D-glucosamine binding site. The active-site Proton donor is Cys116. Cys116 carries the 2-(S-cysteinyl)pyruvic acid O-phosphothioketal modification. Residues 121–125, Asp304, and Ile326 each bind UDP-N-acetyl-alpha-D-glucosamine; that span reads RPVDQ.

It belongs to the EPSP synthase family. MurA subfamily.

It localises to the cytoplasm. It catalyses the reaction phosphoenolpyruvate + UDP-N-acetyl-alpha-D-glucosamine = UDP-N-acetyl-3-O-(1-carboxyvinyl)-alpha-D-glucosamine + phosphate. Its pathway is cell wall biogenesis; peptidoglycan biosynthesis. Its function is as follows. Cell wall formation. Adds enolpyruvyl to UDP-N-acetylglucosamine. This chain is UDP-N-acetylglucosamine 1-carboxyvinyltransferase, found in Janthinobacterium sp. (strain Marseille) (Minibacterium massiliensis).